The primary structure comprises 607 residues: Guanine nucleotide-binding protein-like 1 (607 aa).

Positions 1-14 (MPRKKPFSVKQKKK) are enriched in basic residues. Positions 1-81 (MPRKKPFSVK…GPRGYDPNRY (81 aa)) are disordered. A compositionally biased stretch (basic and acidic residues) spans 15-26 (QLQDKRERKRGL). Residues serine 32, serine 33, and serine 34 each carry the phosphoserine modification. 2 positions are modified to phosphothreonine: threonine 48 and threonine 50. Phosphoserine occurs at positions 51 and 68. The CP-type G domain maps to 178-418 (WRQLWRVLEM…LCDCPGLIFP (241 aa)). Residue 225–228 (NKVD) coordinates GTP. A Phosphoserine modification is found at serine 324. Residues 367-374 (GFPNVGKS) and 411-415 (DCPGL) each bind GTP. The tract at residues 547 to 607 (GPAGDEEEEE…PYALLGEDEC (61 aa)) is disordered. The segment covering 550–584 (GDEEEEEEEELSSSCEEEGEEDRDADEEGEGDEET) has biased composition (acidic residues). 3 positions are modified to phosphoserine: serine 561, serine 562, and serine 563.

It belongs to the TRAFAC class YlqF/YawG GTPase family.

Possible regulatory or functional link with the histocompatibility cluster. The sequence is that of Guanine nucleotide-binding protein-like 1 (GNL1) from Homo sapiens (Human).